We begin with the raw amino-acid sequence, 386 residues long: Alanine racemase (386 aa).

The active-site Proton acceptor; specific for D-alanine is Lys-38. Lys-38 carries the post-translational modification N6-(pyridoxal phosphate)lysine. A substrate-binding site is contributed by Arg-136. The active-site Proton acceptor; specific for L-alanine is the Tyr-267. Met-315 contacts substrate.

Belongs to the alanine racemase family. Pyridoxal 5'-phosphate is required as a cofactor.

The catalysed reaction is L-alanine = D-alanine. It functions in the pathway amino-acid biosynthesis; D-alanine biosynthesis; D-alanine from L-alanine: step 1/1. Catalyzes the interconversion of L-alanine and D-alanine. May also act on other amino acids. In Clostridium perfringens (strain ATCC 13124 / DSM 756 / JCM 1290 / NCIMB 6125 / NCTC 8237 / Type A), this protein is Alanine racemase (alr).